The following is a 399-amino-acid chain: Dual-specificity RNA methyltransferase RlmN (399 aa).

Glu-116 (proton acceptor) is an active-site residue. Positions 122-352 (SEDRLTLCIS…VLLRRSMGRD (231 aa)) constitute a Radical SAM core domain. The cysteines at positions 129 and 357 are disulfide-linked. [4Fe-4S] cluster-binding residues include Cys-136, Cys-140, and Cys-143. S-adenosyl-L-methionine-binding positions include 185–186 (GE), Ser-217, 238–240 (SLN), and Asn-314. The S-methylcysteine intermediate role is filled by Cys-357.

The protein belongs to the radical SAM superfamily. RlmN family. Requires [4Fe-4S] cluster as cofactor.

Its subcellular location is the cytoplasm. The catalysed reaction is adenosine(2503) in 23S rRNA + 2 reduced [2Fe-2S]-[ferredoxin] + 2 S-adenosyl-L-methionine = 2-methyladenosine(2503) in 23S rRNA + 5'-deoxyadenosine + L-methionine + 2 oxidized [2Fe-2S]-[ferredoxin] + S-adenosyl-L-homocysteine. It catalyses the reaction adenosine(37) in tRNA + 2 reduced [2Fe-2S]-[ferredoxin] + 2 S-adenosyl-L-methionine = 2-methyladenosine(37) in tRNA + 5'-deoxyadenosine + L-methionine + 2 oxidized [2Fe-2S]-[ferredoxin] + S-adenosyl-L-homocysteine. Specifically methylates position 2 of adenine 2503 in 23S rRNA and position 2 of adenine 37 in tRNAs. m2A2503 modification seems to play a crucial role in the proofreading step occurring at the peptidyl transferase center and thus would serve to optimize ribosomal fidelity. This chain is Dual-specificity RNA methyltransferase RlmN, found in Bdellovibrio bacteriovorus (strain ATCC 15356 / DSM 50701 / NCIMB 9529 / HD100).